A 300-amino-acid polypeptide reads, in one-letter code: Glycine--tRNA ligase alpha subunit (300 aa).

It belongs to the class-II aminoacyl-tRNA synthetase family. Tetramer of two alpha and two beta subunits.

The protein resides in the cytoplasm. It catalyses the reaction tRNA(Gly) + glycine + ATP = glycyl-tRNA(Gly) + AMP + diphosphate. The protein is Glycine--tRNA ligase alpha subunit of Prochlorococcus marinus (strain MIT 9313).